The chain runs to 174 residues: Adenylate kinase (174 aa).

Positions 12–41 (STGDMLRAAIKAGTPLGLEAKKIIDEGGLV) are NMP. AMP-binding positions include Thr-13, Arg-18, 39–41 (GLV), 67–70 (GFPR), and Gln-74. An LID region spans residues 104–141 (GRRVHLASGRTYHVTYNPPKVEGKDDVTGEDLIQRDDD). ATP-binding positions include Arg-105 and 114–115 (TY). AMP-binding residues include Arg-138 and Arg-149.

The protein belongs to the adenylate kinase family. Monomer.

It is found in the cytoplasm. The enzyme catalyses AMP + ATP = 2 ADP. The protein operates within purine metabolism; AMP biosynthesis via salvage pathway; AMP from ADP: step 1/1. Functionally, catalyzes the reversible transfer of the terminal phosphate group between ATP and AMP. Plays an important role in cellular energy homeostasis and in adenine nucleotide metabolism. The sequence is that of Adenylate kinase from Neisseria lactamica.